A 161-amino-acid polypeptide reads, in one-letter code: 2-C-methyl-D-erythritol 2,4-cyclodiphosphate synthase (161 aa).

D10 and H12 together coordinate a divalent metal cation. 4-CDP-2-C-methyl-D-erythritol 2-phosphate-binding positions include 10–12 and 36–37; these read DVH and HS. H44 is a binding site for a divalent metal cation. 4-CDP-2-C-methyl-D-erythritol 2-phosphate is bound by residues 58-60, 134-137, F141, and R144; these read DIG and TTTE.

The protein belongs to the IspF family. Homotrimer. The cofactor is a divalent metal cation.

It carries out the reaction 4-CDP-2-C-methyl-D-erythritol 2-phosphate = 2-C-methyl-D-erythritol 2,4-cyclic diphosphate + CMP. Its pathway is isoprenoid biosynthesis; isopentenyl diphosphate biosynthesis via DXP pathway; isopentenyl diphosphate from 1-deoxy-D-xylulose 5-phosphate: step 4/6. In terms of biological role, involved in the biosynthesis of isopentenyl diphosphate (IPP) and dimethylallyl diphosphate (DMAPP), two major building blocks of isoprenoid compounds. Catalyzes the conversion of 4-diphosphocytidyl-2-C-methyl-D-erythritol 2-phosphate (CDP-ME2P) to 2-C-methyl-D-erythritol 2,4-cyclodiphosphate (ME-CPP) with a corresponding release of cytidine 5-monophosphate (CMP). This Parabacteroides distasonis (strain ATCC 8503 / DSM 20701 / CIP 104284 / JCM 5825 / NCTC 11152) protein is 2-C-methyl-D-erythritol 2,4-cyclodiphosphate synthase.